Reading from the N-terminus, the 360-residue chain is Hydroxycarboxylic acid receptor 2 (360 aa).

At 1–30 the chain is on the extracellular side; that stretch reads MSKQNHFLVINGKNCCVFRDENIAKVLPPV. Residues 31-51 form a helical membrane-spanning segment; it reads LGLEFVFGLLGNGLALWIFCF. Topologically, residues 52–60 are cytoplasmic; the sequence is HLKSWKSSR. The helical transmembrane segment at 61 to 81 threads the bilayer; sequence IFLFNLAVADFLLIICLPFLT. Residues 82–98 lie on the Extracellular side of the membrane; sequence DNYVQNWDWRFGSIPCR. Cysteine 97 and cysteine 174 are joined by a disulfide. A helical transmembrane segment spans residues 99-119; sequence VMLFMLAMNRQGSIIFLTVVA. The Cytoplasmic portion of the chain corresponds to 120-140; that stretch reads VDRYFRVVHPHHFLNKISNRT. The helical transmembrane segment at 141–161 threads the bilayer; it reads AAIISCFLWGITIGLTVHLLY. The Extracellular segment spans residues 162–189; that stretch reads TDMMTRNGDANLCSSFSICYTFRWHDAM. A helical transmembrane segment spans residues 190–210; the sequence is FLLEFFLPLGIILFCSGRIIW. Topologically, residues 211–226 are cytoplasmic; the sequence is SLRQRQMDRHVKIKRA. The chain crosses the membrane as a helical span at residues 227-247; that stretch reads INFIMVVAIVFVICFLPSVAV. At 248–270 the chain is on the extracellular side; the sequence is RIRIFWLLYKHNVRNCDIYSSVD. Residues 271 to 291 traverse the membrane as a helical segment; the sequence is LAFFTTLSFTYMNSMLDPVVY. Residues 292 to 360 are Cytoplasmic-facing; that stretch reads YFSSPSFPNF…SPPYLASTSR (69 aa). Residues 320 to 360 are disordered; it reads NNRSTSVELTGDPSTIRSIPGALMTDPSEPGSPPYLASTSR. A compositionally biased stretch (polar residues) spans 321–336; it reads NRSTSVELTGDPSTIR. Serine 325 is subject to Phosphoserine.

The protein belongs to the G-protein coupled receptor 1 family. Expressed in adipose tissue, lung and spleen.

It is found in the cell membrane. Acts as a high affinity receptor for both nicotinic acid (also known as niacin) and (D)-beta-hydroxybutyrate and mediates increased adiponectin secretion and decreased lipolysis through G(i)-protein-mediated inhibition of adenylyl cyclase. This pharmacological effect requires nicotinic acid doses that are much higher than those provided by a normal diet. Mediates nicotinic acid-induced apoptosis in mature neutrophils. Receptor activation by nicotinic acid results in reduced cAMP levels which may affect activity of cAMP-dependent protein kinase A and phosphorylation of target proteins, leading to neutrophil apoptosis. The rank order of potency for the displacement of nicotinic acid binding is 5-methyl pyrazole-3-carboxylic acid = pyridine-3-acetic acid &gt; acifran &gt; 5-methyl nicotinic acid = acipimox &gt;&gt; nicotinuric acid = nicotinamide. The polypeptide is Hydroxycarboxylic acid receptor 2 (Hcar2) (Rattus norvegicus (Rat)).